A 307-amino-acid chain; its full sequence is Exosome complex component RRP45A (307 aa).

Belongs to the RNase PH family. As to expression, expressed in roots, leaves, stems, buds and siliques.

It is found in the cytoplasm. The protein localises to the nucleus. In terms of biological role, probable 3'-&gt;5' exoribonuclease involved in the regulation of cuticular wax biosynthesis. Can perform exosomal functions and partially complement the yeast rrp45 null mutant. The polypeptide is Exosome complex component RRP45A (Arabidopsis thaliana (Mouse-ear cress)).